The primary structure comprises 362 residues: Small ribosomal subunit protein uS4m (362 aa).

In terms of domain architecture, S4 RNA-binding spans 105-179 (TRFDVILLRL…FYKEILVEKI (75 aa)).

It belongs to the universal ribosomal protein uS4 family. Component of the mitochondrial ribosome small subunit.

The protein localises to the mitochondrion. The chain is Small ribosomal subunit protein uS4m (RPS4) from Arabidopsis thaliana (Mouse-ear cress).